Consider the following 96-residue polypeptide: Ubiquitin-related modifier 1 (96 aa).

Gly96 carries the 1-thioglycine modification. Gly96 participates in a covalent cross-link: Glycyl lysine isopeptide (Gly-Lys) (interchain with K-? in acceptor proteins).

This sequence belongs to the URM1 family. Post-translationally, C-terminal thiocarboxylation occurs in 2 steps, it is first acyl-adenylated (-COAMP) via the hesA/moeB/thiF part of UBA4, then thiocarboxylated (-COSH) via the rhodanese domain of UBA4.

The protein localises to the cytoplasm. It participates in tRNA modification; 5-methoxycarbonylmethyl-2-thiouridine-tRNA biosynthesis. In terms of biological role, acts as a sulfur carrier required for 2-thiolation of mcm(5)S(2)U at tRNA wobble positions of cytosolic tRNA(Lys), tRNA(Glu) and tRNA(Gln). Serves as sulfur donor in tRNA 2-thiolation reaction by being thiocarboxylated (-COSH) at its C-terminus by the MOCS3 homolog UBA4. The sulfur is then transferred to tRNA to form 2-thiolation of mcm(5)S(2)U. Prior mcm(5) tRNA modification by the elongator complex is required for 2-thiolation. Also acts as a ubiquitin-like protein (UBL) that is covalently conjugated via an isopeptide bond to lysine residues of target proteins such as AHP1. The thiocarboxylated form serves as substrate for conjugation and oxidative stress specifically induces the formation of UBL-protein conjugates. The sequence is that of Ubiquitin-related modifier 1 from Encephalitozoon cuniculi (strain GB-M1) (Microsporidian parasite).